A 122-amino-acid chain; its full sequence is Small ribosomal subunit protein bS6 (122 aa).

The protein belongs to the bacterial ribosomal protein bS6 family.

In terms of biological role, binds together with bS18 to 16S ribosomal RNA. The protein is Small ribosomal subunit protein bS6 of Neisseria gonorrhoeae (strain ATCC 700825 / FA 1090).